The chain runs to 681 residues: U3 small nucleolar ribonucleoprotein protein MPP10 (681 aa).

A phosphoserine mark is found at S61, S120, and S140. The stretch at 109-139 (ECEDEECEEDASEVEADNQENLETDLDEEQL) forms a coiled coil. Acidic residues predominate over residues 111–144 (EDEECEEDASEVEADNQENLETDLDEEQLSDEGG). Disordered stretches follow at residues 111–202 (EDEE…SVVD), 215–256 (LEKV…GRQK), and 268–365 (YKDF…EKRQ). Basic and acidic residues predominate over residues 145 to 163 (DVPKGRDRAKSSRKSDPRK). Residues S164, S168, and S172 each carry the phosphoserine modification. The span at 215–227 (LEKVEKEEEKRPD) shows a compositional bias: basic and acidic residues. Composition is skewed to acidic residues over residues 228 to 248 (GEEE…DESE) and 273 to 322 (DPVE…EDEN). S244, S247, S277, and S346 each carry phosphoserine. Residues 349 to 383 (AVKQESDEVKSSFEKRQEKMNEKIASLEKELLDKK) are a coiled coil. Residue K351 forms a Glycyl lysine isopeptide (Lys-Gly) (interchain with G-Cter in SUMO2) linkage. A compositionally biased stretch (basic and acidic residues) spans 352-365 (QESDEVKSSFEKRQ). Glycyl lysine isopeptide (Lys-Gly) (interchain with G-Cter in SUMO2) cross-links involve residues K383 and K395. A coiled-coil region spans residues 471–491 (AEIYEQEYLKLNQQKTEEEDN). K556 is covalently cross-linked (Glycyl lysine isopeptide (Lys-Gly) (interchain with G-Cter in SUMO2)). Residues 560–576 (KAGDLKTAAEKTATDKK) show a composition bias toward basic and acidic residues. A disordered region spans residues 560–644 (KAGDLKTAAE…RKDKPLKSSQ (85 aa)). The stretch at 575–604 (KKRERRKKKYQKRLKIKEKEKRKKLLEKNN) forms a coiled coil. Positions 577–599 (RERRKKKYQKRLKIKEKEKRKKL) are enriched in basic residues. Residue K609 is modified to N6-acetyllysine. Positions 630-640 (LLKDERKDKPL) are enriched in basic and acidic residues. Residues K632 and K649 each participate in a glycyl lysine isopeptide (Lys-Gly) (interchain with G-Cter in SUMO2) cross-link. Positions 657 to 681 (QINDAKQPEKIKKKKQDISVHKLKL) are disordered. Over residues 662–681 (KQPEKIKKKKQDISVHKLKL) the composition is skewed to basic and acidic residues.

It belongs to the MPP10 family. Part of the small subunit (SSU) processome, composed of more than 70 proteins and the RNA chaperone small nucleolar RNA (snoRNA) U3. Component of a heterotrimeric complex containing IMP3, IMP4 and MPHOSPH10. Interacts with IMP3 and IMP4. Phosphorylated in M (mitotic) phase.

It localises to the nucleus. The protein localises to the nucleolus. Its subcellular location is the chromosome. In terms of biological role, component of the 60-80S U3 small nucleolar ribonucleoprotein (U3 snoRNP). Required for the early cleavages during pre-18S ribosomal RNA processing. Part of the small subunit (SSU) processome, first precursor of the small eukaryotic ribosomal subunit. During the assembly of the SSU processome in the nucleolus, many ribosome biogenesis factors, an RNA chaperone and ribosomal proteins associate with the nascent pre-rRNA and work in concert to generate RNA folding, modifications, rearrangements and cleavage as well as targeted degradation of pre-ribosomal RNA by the RNA exosome. This is U3 small nucleolar ribonucleoprotein protein MPP10 (Mphosph10) from Mus musculus (Mouse).